A 406-amino-acid polypeptide reads, in one-letter code: Odorant receptor 10a (406 aa).

The Cytoplasmic segment spans residues 1-45 (MSEWLRFLKRDQQLDVYFFAVPRLSLDIMGYWPGKTGDTWPWRSL). Residues 46 to 66 (IHFAILAIGVATELHAGMCFL) form a helical membrane-spanning segment. The Extracellular segment spans residues 67–74 (DRQQITLA). Residues 75–95 (LETLCPAGTSAVTLLKMFLML) traverse the membrane as a helical segment. The Cytoplasmic segment spans residues 96–143 (RFRQDLSIMWNRLRGLLFDPNWERPEQRDIRLKHSAMAARINFWPLSA). Residues 144-164 (GFFTCTTYNLKPILIAMILYL) traverse the membrane as a helical segment. The Extracellular segment spans residues 165–189 (QNRYEDFVWFTPFNMTMPKVLLNYP). N-linked (GlcNAc...) asparagine glycosylation is present at Asn-178. A helical membrane pass occupies residues 190-210 (FFPLTYIFIAYTGYVTIFMFG). Over 211 to 281 (GCDGFYFEFC…LTRFFRDRYT (71 aa)) the chain is Cytoplasmic. A helical membrane pass occupies residues 282-302 (IITLAHFVSAAMVIGFSMVNL). Over 303–308 (LTLGNN) the chain is Extracellular. A helical transmembrane segment spans residues 309–329 (GLGAMLYVAYTVAALSQLLVY). Over 330-372 (CYGGTLVAESSTGLCRAMFSCPWQLFKPKQRRLVQLLILRSQR) the chain is Cytoplasmic. The helical transmembrane segment at 373-393 (PVSMAVPFFSPSLATFAAILQ) threads the bilayer. The Extracellular portion of the chain corresponds to 394-406 (TSGSIIALVKSFQ).

The protein belongs to the insect chemoreceptor superfamily. Heteromeric odorant receptor channel (TC 1.A.69) family. Or1a subfamily. In terms of assembly, interacts with Orco. Complexes exist early in the endomembrane system in olfactory sensory neurons (OSNs), coupling these complexes to the conserved ciliary trafficking pathway. In terms of tissue distribution, expressed in olfactory sensory neurons in the antenna.

The protein localises to the cell membrane. Functionally, odorant receptor which mediates acceptance or avoidance behavior, depending on its substrates. The odorant receptor repertoire encodes a large collection of odor stimuli that vary widely in identity, intensity, and duration. May form a complex with Orco to form odorant-sensing units, providing sensitive and prolonged odorant signaling and calcium permeability. Involved in the behavioral responses to esters, and specifically to ethyl hexanoate, benzaldehyde, and acetophenone. The chain is Odorant receptor 10a (Or10a) from Drosophila melanogaster (Fruit fly).